We begin with the raw amino-acid sequence, 203 residues long: CS5 fimbrial subunit (203 aa).

Residues 1–22 form the signal peptide; sequence MKKNLLITSVLAMATVSGSVLA.

The protein localises to the fimbrium. Functionally, major subunit of fimbriae. Fimbriae (also called pili), are polar filaments radiating from the surface of the bacterium to a length of 0.5-1.5 micrometers and numbering 100-300 per cell. They enable bacteria to colonize the epithelium of specific host organs. This chain is CS5 fimbrial subunit, found in Escherichia coli.